Consider the following 74-residue polypeptide: Protein SMIM7 homolog (74 aa).

The chain crosses the membrane as a helical span at residues 53-73 (FRAFIGLWNIFIMFLMLVFFG).

Belongs to the SMIM7 family.

The protein resides in the membrane. This chain is Protein SMIM7 homolog, found in Ixodes scapularis (Black-legged tick).